Here is a 440-residue protein sequence, read N- to C-terminus: Tyrosine--tRNA ligase (440 aa).

Residue tyrosine 46 participates in L-tyrosine binding. The short motif at 51–60 is the 'HIGH' region element; it reads PTAPSLHIGN. Residues tyrosine 181 and glutamine 185 each contribute to the L-tyrosine site. The 'KMSKS' region motif lies at 241–245; that stretch reads KFGKS. Position 244 (lysine 244) interacts with ATP. Residues 373–430 enclose the S4 RNA-binding domain; the sequence is DRIAQAGVSAGLFKSISEARKTIKSGGVYVNNVRVEDEEQLLGDGDFLKGRFVVLRRG.

This sequence belongs to the class-I aminoacyl-tRNA synthetase family. TyrS type 1 subfamily. In terms of assembly, homodimer.

It localises to the cytoplasm. The enzyme catalyses tRNA(Tyr) + L-tyrosine + ATP = L-tyrosyl-tRNA(Tyr) + AMP + diphosphate + H(+). Functionally, catalyzes the attachment of tyrosine to tRNA(Tyr) in a two-step reaction: tyrosine is first activated by ATP to form Tyr-AMP and then transferred to the acceptor end of tRNA(Tyr). The protein is Tyrosine--tRNA ligase of Bifidobacterium animalis subsp. lactis (strain AD011).